Consider the following 371-residue polypeptide: UDP-N-acetylglucosamine--N-acetylmuramyl-(pentapeptide) pyrophosphoryl-undecaprenol N-acetylglucosamine transferase (371 aa).

UDP-N-acetyl-alpha-D-glucosamine contacts are provided by residues 10-12 (TGG), N122, R166, S196, and Q301.

The protein belongs to the glycosyltransferase 28 family. MurG subfamily.

It is found in the cell inner membrane. The enzyme catalyses di-trans,octa-cis-undecaprenyl diphospho-N-acetyl-alpha-D-muramoyl-L-alanyl-D-glutamyl-meso-2,6-diaminopimeloyl-D-alanyl-D-alanine + UDP-N-acetyl-alpha-D-glucosamine = di-trans,octa-cis-undecaprenyl diphospho-[N-acetyl-alpha-D-glucosaminyl-(1-&gt;4)]-N-acetyl-alpha-D-muramoyl-L-alanyl-D-glutamyl-meso-2,6-diaminopimeloyl-D-alanyl-D-alanine + UDP + H(+). It participates in cell wall biogenesis; peptidoglycan biosynthesis. Functionally, cell wall formation. Catalyzes the transfer of a GlcNAc subunit on undecaprenyl-pyrophosphoryl-MurNAc-pentapeptide (lipid intermediate I) to form undecaprenyl-pyrophosphoryl-MurNAc-(pentapeptide)GlcNAc (lipid intermediate II). In Halothermothrix orenii (strain H 168 / OCM 544 / DSM 9562), this protein is UDP-N-acetylglucosamine--N-acetylmuramyl-(pentapeptide) pyrophosphoryl-undecaprenol N-acetylglucosamine transferase.